Here is a 656-residue protein sequence, read N- to C-terminus: Cyclic AMP-dependent transcription factor ATF-6 alpha (656 aa).

The interval 1-137 (MESPFSPVLP…SPSSVEPLKE (137 aa)) is transcription activation. The Cytoplasmic portion of the chain corresponds to 1–377 (MESPFSPVLP…VMIVLAFIML (377 aa)). K75 is covalently cross-linked (Glycyl lysine isopeptide (Lys-Gly) (interchain with G-Cter in SUMO2)). Residues 75 to 169 (KAEPQPLSPA…MSSKPSVQPK (95 aa)) form a disordered region. Low complexity-rich tracts occupy residues 78–101 (PQPLSPASSSCSISSPRSTDSCSS) and 111–121 (LLSSSQSPLSL). Residue K139 forms a Glycyl lysine isopeptide (Lys-Gly) (interchain with G-Cter in ubiquitin) linkage. The bZIP domain occupies 293–356 (VLRRQQRMIK…DEVVSENQRL (64 aa)). The tract at residues 295–326 (RRQQRMIKNRESACQSRKKKKEYMLGLEARLK) is basic motif. Residues 335–342 (LKKENGSL) form a leucine-zipper region. A helical; Signal-anchor for type II membrane protein transmembrane segment spans residues 378 to 398 (NYGPMSMLEQESRRVKPSVSP). The segment at 391–429 (RVKPSVSPANQRRHLLEFSAKEVKDTSDGDNQKDSYSYD) is disordered. Topologically, residues 399–656 (ANQRRHLLEF…VVSTIPESLQ (258 aa)) are lumenal. Residues 404-427 (HLLEFSAKEVKDTSDGDNQKDSYS) are compositionally biased toward basic and acidic residues. Positions 455 to 575 (QPLINTTESL…ATTHNKTTRP (121 aa)) are interaction with THBS4. N-linked (GlcNAc...) asparagine glycans are attached at residues N459, N570, and N629. Residues 632-650 (STFFGSPPTTTETTHVVST) show a composition bias toward low complexity. The tract at residues 632-656 (STFFGSPPTTTETTHVVSTIPESLQ) is disordered.

It belongs to the bZIP family. ATF subfamily. In terms of assembly, interacts with XBP1 isoform 2; the interaction occurs in a ER stress-dependent manner. Interacts with LACC1. Interacts with THBS4 (via EGF-like 3; calcium-binding domain) which facilitates its processing, activation and nuclear translocation. Interacts (via lumenal domain) with THBS1. As to quaternary structure, homodimer and heterodimer with ATF6-beta. The dimer interacts with the nuclear transcription factor Y (NF-Y) trimer through direct binding to NF-Y subunit C (NF-YC). Also interacts with the transcription factors GTF2I, YY1 and SRF. During unfolded protein response, a fragment of approximately 50 kDa containing the cytoplasmic transcription factor domain is released by proteolysis. The cleavage seems to be performed sequentially by site-1 (MBTPS1, S1P) and site-2 (MBTPS2, S2P) proteases. In terms of processing, N-glycosylated; in its luminal domain. The glycosylation status may serve as a sensor for ER homeostasis, resulting in ATF6 activation to trigger the unfolded protein response (UPR). Post-translationally, ubiquitinated by RNF186 at Lys-139, which is required for pattern recognition receptor-induced unfolded protein response-associated outcomes.

It localises to the endoplasmic reticulum membrane. The protein localises to the golgi apparatus membrane. Its subcellular location is the nucleus. Precursor of the transcription factor form (Processed cyclic AMP-dependent transcription factor ATF-6 alpha), which is embedded in the endoplasmic reticulum membrane. Endoplasmic reticulum stress promotes processing of this form, releasing the transcription factor form that translocates into the nucleus, where it activates transcription of genes involved in the unfolded protein response (UPR). Its function is as follows. Transcription factor that initiates the unfolded protein response (UPR) during endoplasmic reticulum stress by activating transcription of genes involved in the UPR. Binds DNA on the 5'-CCAC[GA]-3'half of the ER stress response element (ERSE) (5'-CCAAT-N(9)-CCAC[GA]-3') and of ERSE II (5'-ATTGG-N-CCACG-3'). Binding to ERSE requires binding of NF-Y to ERSE. Could also be involved in activation of transcription by the serum response factor. May play a role in foveal development and cone function in the retina. The chain is Cyclic AMP-dependent transcription factor ATF-6 alpha (Atf6) from Mus musculus (Mouse).